Reading from the N-terminus, the 126-residue chain is Small ribosomal subunit protein uS12 (126 aa).

The span at 1–16 (MPTVNQLVRQGRTMNK) shows a compositional bias: polar residues. The disordered stretch occupies residues 1 to 24 (MPTVNQLVRQGRTMNKTKTKSPAL). D89 bears the 3-methylthioaspartic acid mark.

The protein belongs to the universal ribosomal protein uS12 family. Part of the 30S ribosomal subunit. Contacts proteins S8 and S17. May interact with IF1 in the 30S initiation complex.

In terms of biological role, with S4 and S5 plays an important role in translational accuracy. Functionally, interacts with and stabilizes bases of the 16S rRNA that are involved in tRNA selection in the A site and with the mRNA backbone. Located at the interface of the 30S and 50S subunits, it traverses the body of the 30S subunit contacting proteins on the other side and probably holding the rRNA structure together. The combined cluster of proteins S8, S12 and S17 appears to hold together the shoulder and platform of the 30S subunit. This chain is Small ribosomal subunit protein uS12, found in Elusimicrobium minutum (strain Pei191).